A 275-amino-acid polypeptide reads, in one-letter code: uncharacterized protein (275 aa).

4 residues coordinate Mg(2+): Glu71, Asp85, Ile87, and Asp88. Residue Glu71 participates in substrate binding. Ile87–Thr90 contacts substrate. Helical transmembrane passes span Ile87–Val107, Pro112–Gly132, and Ile178–Gly198. Asp208 serves as a coordination point for Mg(2+). Position 208 (Asp208) interacts with substrate.

This sequence belongs to the inositol monophosphatase superfamily.

Its subcellular location is the cell membrane. This is an uncharacterized protein from Sinorhizobium fredii (strain NBRC 101917 / NGR234).